We begin with the raw amino-acid sequence, 401 residues long: MTLHTSPILHSLLDTDAYKLHMQQAVYHHYYDVDVAAEFRCRGDELLGVYADEIAHQVDLMRFLSLNDDEFTYLSSLPFFKPDYLHWLRGFRFNPQQVSIKNNAGKLDIRITGPWREVILWEVPLLAVISEVVHRHRSPNVTAEQALVQLSASLESFRQHSADVDLSQFKLMDFGTRRRFSRDVQQTIVTALQADFPYLIGTSNYDLARRLDITPVGTQAHEWFQAHQQISPTLANSQRAALQMWLREYPSHLGIALTDCITMDAFLRDFDLPFAEAYQGLRHDSGDPVDWGEKAIAHYQRLNIDPMSKTLVFSDNLNLDKALALYRHFGQRVNLVFGIGTRLTCDIPGVKPLNIVIKLVECNGKPVAKLSDSPGKTICQDQNFVCELRKAFDLPRVKKAS.

Histidine 221 carries the post-translational modification Phosphohistidine; by autocatalysis.

The protein belongs to the NAPRTase family. In terms of processing, transiently phosphorylated on a His residue during the reaction cycle. Phosphorylation strongly increases the affinity for substrates and increases the rate of nicotinate D-ribonucleotide production. Dephosphorylation regenerates the low-affinity form of the enzyme, leading to product release.

It carries out the reaction nicotinate + 5-phospho-alpha-D-ribose 1-diphosphate + ATP + H2O = nicotinate beta-D-ribonucleotide + ADP + phosphate + diphosphate. It participates in cofactor biosynthesis; NAD(+) biosynthesis; nicotinate D-ribonucleotide from nicotinate: step 1/1. Catalyzes the synthesis of beta-nicotinate D-ribonucleotide from nicotinate and 5-phospho-D-ribose 1-phosphate at the expense of ATP. The protein is Nicotinate phosphoribosyltransferase of Pectobacterium carotovorum subsp. carotovorum (strain PC1).